Here is a 130-residue protein sequence, read N- to C-terminus: Small ribosomal subunit protein uS9 (130 aa).

The protein belongs to the universal ribosomal protein uS9 family.

The chain is Small ribosomal subunit protein uS9 from Bacillus licheniformis (strain ATCC 14580 / DSM 13 / JCM 2505 / CCUG 7422 / NBRC 12200 / NCIMB 9375 / NCTC 10341 / NRRL NRS-1264 / Gibson 46).